The chain runs to 180 residues: Large ribosomal subunit protein uL15 (180 aa).

The segment at methionine 1–glutamine 62 is disordered. The span at glycine 35 to glycine 44 shows a compositional bias: basic residues.

This sequence belongs to the universal ribosomal protein uL15 family. In terms of assembly, part of the 50S ribosomal subunit.

Binds to the 23S rRNA. The protein is Large ribosomal subunit protein uL15 of Leptospira borgpetersenii serovar Hardjo-bovis (strain JB197).